Reading from the N-terminus, the 325-residue chain is Probable cell division protein WhiA (325 aa).

The segment at residues 273 to 306 is a DNA-binding region (H-T-H motif); the sequence is SLEELGALADPPLTKDAVAGRIRRLLALADKRAN.

It belongs to the WhiA family.

Functionally, involved in cell division and chromosome segregation. The polypeptide is Probable cell division protein WhiA (Parafrankia sp. (strain EAN1pec)).